Reading from the N-terminus, the 315-residue chain is DNA-directed RNA polymerase subunit alpha (315 aa).

Positions 1–228 (MLEIEKPKIE…EHLRLFVGLT (228 aa)) are alpha N-terminal domain (alpha-NTD). The segment at 245–315 (KNKLLEMPIE…LGLDLRHDEE (71 aa)) is alpha C-terminal domain (alpha-CTD).

The protein belongs to the RNA polymerase alpha chain family. As to quaternary structure, homodimer. The RNAP catalytic core consists of 2 alpha, 1 beta, 1 beta' and 1 omega subunit. When a sigma factor is associated with the core the holoenzyme is formed, which can initiate transcription.

It catalyses the reaction RNA(n) + a ribonucleoside 5'-triphosphate = RNA(n+1) + diphosphate. In terms of biological role, DNA-dependent RNA polymerase catalyzes the transcription of DNA into RNA using the four ribonucleoside triphosphates as substrates. This is DNA-directed RNA polymerase subunit alpha from Desulforudis audaxviator (strain MP104C).